The chain runs to 256 residues: Pimeloyl-[acyl-carrier protein] methyl ester esterase (256 aa).

Positions 15–242 (HLVLLHGWGL…AAHAPFISHP (228 aa)) constitute an AB hydrolase-1 domain. Residues tryptophan 22, 82-83 (SL), and 143-147 (FLALQ) each bind substrate. Serine 82 functions as the Nucleophile in the catalytic mechanism. Residues aspartate 207 and histidine 235 contribute to the active site. Histidine 235 serves as a coordination point for substrate.

This sequence belongs to the AB hydrolase superfamily. Carboxylesterase BioH family. As to quaternary structure, monomer.

It localises to the cytoplasm. The catalysed reaction is 6-carboxyhexanoyl-[ACP] methyl ester + H2O = 6-carboxyhexanoyl-[ACP] + methanol + H(+). It functions in the pathway cofactor biosynthesis; biotin biosynthesis. In terms of biological role, the physiological role of BioH is to remove the methyl group introduced by BioC when the pimeloyl moiety is complete. It allows to synthesize pimeloyl-ACP via the fatty acid synthetic pathway through the hydrolysis of the ester bonds of pimeloyl-ACP esters. The protein is Pimeloyl-[acyl-carrier protein] methyl ester esterase of Citrobacter koseri (strain ATCC BAA-895 / CDC 4225-83 / SGSC4696).